Reading from the N-terminus, the 66-residue chain is Small ribosomal subunit protein bS21 (66 aa).

Positions Lys-47–Asp-66 are disordered. Residues Arg-53–Asp-66 are compositionally biased toward basic residues.

It belongs to the bacterial ribosomal protein bS21 family.

The sequence is that of Small ribosomal subunit protein bS21 from Rickettsia bellii (strain RML369-C).